The sequence spans 340 residues: MLFDAVLLLSFGGPEGPQEVRPFLENVTRGRGIPPERLDEVAEHYFHFGGVSPINGINRALVDQISRQLESAGHPLPVFFGNRNWHPMVEDTVAEMRDKGIRRAAVFTTSAWGGYSGCKQYVEDIARARAAVGDGAPELVKLRQYFDHPSLVQLYAEAVSAAMSSLRGEARLVFTAHSIPLAADRRHGPELYSRQVHYLAQLVAAATGHQDYDVVWQSRSGPPQVPWLEPDIVDHLAALKDRGIRSVAVAPIGFVSDHLEVVWDLDNEAREYAQEHDIELVRAATPGADERFARLAVDLITEVVEGRPALRASGVNPVPGYGFSVNGALCSPLCCGVQED.

Residues S52 and Y121 each contribute to the Fe-coproporphyrin III site. Fe(2+)-binding residues include H177 and E260.

The protein belongs to the ferrochelatase family.

It is found in the cytoplasm. The enzyme catalyses Fe-coproporphyrin III + 2 H(+) = coproporphyrin III + Fe(2+). It functions in the pathway porphyrin-containing compound metabolism; protoheme biosynthesis. Its function is as follows. Involved in coproporphyrin-dependent heme b biosynthesis. Catalyzes the insertion of ferrous iron into coproporphyrin III to form Fe-coproporphyrin III. The protein is Coproporphyrin III ferrochelatase of Mycobacteroides abscessus (strain ATCC 19977 / DSM 44196 / CCUG 20993 / CIP 104536 / JCM 13569 / NCTC 13031 / TMC 1543 / L948) (Mycobacterium abscessus).